The primary structure comprises 453 residues: UDP-N-acetylmuramate--L-alanine ligase (453 aa).

112–118 is an ATP binding site; sequence GTHGKTT.

Belongs to the MurCDEF family.

The protein resides in the cytoplasm. The enzyme catalyses UDP-N-acetyl-alpha-D-muramate + L-alanine + ATP = UDP-N-acetyl-alpha-D-muramoyl-L-alanine + ADP + phosphate + H(+). It participates in cell wall biogenesis; peptidoglycan biosynthesis. Its function is as follows. Cell wall formation. The chain is UDP-N-acetylmuramate--L-alanine ligase from Bdellovibrio bacteriovorus (strain ATCC 15356 / DSM 50701 / NCIMB 9529 / HD100).